Reading from the N-terminus, the 324-residue chain is Putative exosome complex exonuclease RRP42 (324 aa).

It belongs to the RNase PH family. Component of the RNA exosome complex.

The protein localises to the nucleus. It is found in the nucleolus. It localises to the cytoplasm. Its function is as follows. Non-catalytic component of the RNA exosome complex which has 3'-&gt;5' exoribonuclease activity and participates in a multitude of cellular RNA processing and degradation events. This chain is Putative exosome complex exonuclease RRP42 (exosc7), found in Dictyostelium discoideum (Social amoeba).